The following is a 311-amino-acid chain: Geranylgeranyl transferase type-2 subunit beta (311 aa).

PFTB repeat units follow at residues 54–95 (KERI…AMLD), 102–143 (KDKV…AILG), 150–191 (KNTA…KILN), 197–239 (DEEL…AIIG), and 246–288 (RNQL…SLLQ). Geranylgeranyl diphosphate is bound by residues 176-178 (HGA) and 218-230 (RPEK…YGWW). Zn(2+) contacts are provided by Asp-224, Cys-226, and His-276.

The protein belongs to the protein prenyltransferase subunit beta family. As to quaternary structure, heterodimer of an alpha and a beta subunit. Requires Zn(2+) as cofactor.

The catalysed reaction is geranylgeranyl diphosphate + L-cysteinyl-[protein] = S-geranylgeranyl-L-cysteinyl-[protein] + diphosphate. Catalyzes the transfer of a geranyl-geranyl moiety from geranyl-geranyl pyrophosphate to proteins having the C-terminal -XCC or -XCXC, where both cysteines may become modified. The sequence is that of Geranylgeranyl transferase type-2 subunit beta (ptb1) from Schizosaccharomyces pombe (strain 972 / ATCC 24843) (Fission yeast).